Reading from the N-terminus, the 274-residue chain is 2,3,4,5-tetrahydropyridine-2,6-dicarboxylate N-succinyltransferase (274 aa).

Residues R104 and D141 each contribute to the substrate site.

It belongs to the transferase hexapeptide repeat family. As to quaternary structure, homotrimer.

The protein localises to the cytoplasm. The catalysed reaction is (S)-2,3,4,5-tetrahydrodipicolinate + succinyl-CoA + H2O = (S)-2-succinylamino-6-oxoheptanedioate + CoA. Its pathway is amino-acid biosynthesis; L-lysine biosynthesis via DAP pathway; LL-2,6-diaminopimelate from (S)-tetrahydrodipicolinate (succinylase route): step 1/3. This is 2,3,4,5-tetrahydropyridine-2,6-dicarboxylate N-succinyltransferase from Wigglesworthia glossinidia brevipalpis.